The sequence spans 83 residues: Putative defensin-like protein 110 (83 aa).

The signal sequence occupies residues 1–24; the sequence is MAITKKNLIAFVFTILFVISYVHC. Disulfide bonds link Cys-43-Cys-81, Cys-49-Cys-73, Cys-59-Cys-79, and Cys-63-Cys-80.

This sequence belongs to the DEFL family.

The protein localises to the secreted. This chain is Putative defensin-like protein 110, found in Arabidopsis thaliana (Mouse-ear cress).